The primary structure comprises 60 residues: MAKGKENRIVITLECTEAKKEGKTVSRYSTTKNKKNTTDRLVLKKYNPNLQRHTLHKEIK.

The protein belongs to the bacterial ribosomal protein bL33 family.

The protein is Large ribosomal subunit protein bL33 of Chlorobium luteolum (strain DSM 273 / BCRC 81028 / 2530) (Pelodictyon luteolum).